Reading from the N-terminus, the 379-residue chain is Histidinol-phosphate aminotransferase (379 aa).

At K231 the chain carries N6-(pyridoxal phosphate)lysine.

It belongs to the class-II pyridoxal-phosphate-dependent aminotransferase family. Histidinol-phosphate aminotransferase subfamily. Homodimer. It depends on pyridoxal 5'-phosphate as a cofactor.

The catalysed reaction is L-histidinol phosphate + 2-oxoglutarate = 3-(imidazol-4-yl)-2-oxopropyl phosphate + L-glutamate. It functions in the pathway amino-acid biosynthesis; L-histidine biosynthesis; L-histidine from 5-phospho-alpha-D-ribose 1-diphosphate: step 7/9. This Mycolicibacterium smegmatis (strain ATCC 700084 / mc(2)155) (Mycobacterium smegmatis) protein is Histidinol-phosphate aminotransferase.